Consider the following 379-residue polypeptide: Homoserine O-succinyltransferase (379 aa).

An AB hydrolase-1 domain is found at 51–360 (NAVLICHALS…DAPQGHDAFL (310 aa)). The active-site Nucleophile is the serine 157. Residue arginine 227 participates in substrate binding. Catalysis depends on residues aspartate 323 and histidine 356. Aspartate 357 serves as a coordination point for substrate.

Belongs to the AB hydrolase superfamily. MetX family. As to quaternary structure, homodimer.

It is found in the cytoplasm. The catalysed reaction is L-homoserine + succinyl-CoA = O-succinyl-L-homoserine + CoA. Its pathway is amino-acid biosynthesis; L-methionine biosynthesis via de novo pathway; O-succinyl-L-homoserine from L-homoserine: step 1/1. In terms of biological role, transfers a succinyl group from succinyl-CoA to L-homoserine, forming succinyl-L-homoserine. The chain is Homoserine O-succinyltransferase from Ectopseudomonas mendocina (strain ymp) (Pseudomonas mendocina).